Reading from the N-terminus, the 385-residue chain is DNA replication and repair protein RecF (385 aa).

An ATP-binding site is contributed by Gly30–Thr37.

Belongs to the RecF family.

The protein resides in the cytoplasm. Functionally, the RecF protein is involved in DNA metabolism; it is required for DNA replication and normal SOS inducibility. RecF binds preferentially to single-stranded, linear DNA. It also seems to bind ATP. This is DNA replication and repair protein RecF from Mycobacterium leprae (strain Br4923).